Consider the following 443-residue polypeptide: F-box only protein 39 (443 aa).

The F-box domain occupies Gln13–Arg59.

In terms of assembly, directly interacts with SKP1 and CUL1.

Its function is as follows. Substrate-recognition component of the SCF (SKP1-CUL1-F-box protein)-type E3 ubiquitin ligase complex. In Rattus norvegicus (Rat), this protein is F-box only protein 39 (Fbxo39).